The following is a 325-amino-acid chain: Plasminogen (325 aa).

Kringle domains lie at 80–146 (ACVK…VPSC) and 159–217 (LTPA…VLSV). Disulfide bonds link C81–C146, C102–C135, C124–C141, and C188–C212.

It belongs to the peptidase S1 family. Plasminogen subfamily.

The protein localises to the secreted. It carries out the reaction Preferential cleavage: Lys-|-Xaa &gt; Arg-|-Xaa, higher selectivity than trypsin. Converts fibrin into soluble products.. Functionally, plasmin dissolves the fibrin of blood clots and acts as a proteolytic factor in a variety of other processes including embryonic development, tissue remodeling, tumor invasion, and inflammation. This is Plasminogen from Petromyzon marinus (Sea lamprey).